We begin with the raw amino-acid sequence, 225 residues long: UPF0700 transmembrane protein YoaK (225 aa).

A run of 6 helical transmembrane segments spans residues Leu10–Gly30, Val56–Met76, Ile99–Ile119, Gly137–Ile157, Thr174–Ala194, and Asp197–Ala217.

Belongs to the UPF0700 family.

The protein localises to the cell membrane. The chain is UPF0700 transmembrane protein YoaK (yoaK) from Bacillus subtilis (strain 168).